The following is a 367-amino-acid chain: RYamide receptor (367 aa).

The Extracellular segment spans residues 1-35 (MDANTTRNESFSLDCELVNPNSTLANVYFLSAVYS). Residues Asn-4, Asn-8, and Asn-21 are each glycosylated (N-linked (GlcNAc...) asparagine). Residues 36–56 (MYAIIFVVALIGNSFVCYIVL) form a helical membrane-spanning segment. The Cytoplasmic segment spans residues 57–66 (SSPPMRTVTN). The chain crosses the membrane as a helical span at residues 67 to 87 (FFILNLAIGDVLITLLCVPFT). Over 88 to 113 (SVSLLMQYWPFGGILCPVVNYSQALS) the chain is Extracellular. Asn-107 carries an N-linked (GlcNAc...) asparagine glycan. A helical transmembrane segment spans residues 114-134 (VFVSAYTLVAISIDKYMIIMW). Residues 135 to 143 (PLKPRISKR) lie on the Cytoplasmic side of the membrane. The chain crosses the membrane as a helical span at residues 144–164 (FATYIIALVWLIAGITVLPSA). Topologically, residues 165–212 (TFTTLINDENILGTSAYEQCDKYICAEEYSKVGQEYGDLYTKVLMFLQ) are extracellular. The chain crosses the membrane as a helical span at residues 213 to 233 (YVIPSLVLLFTYTSIGVVIWC). Over 234–258 (HRIPGEAENSRDQRIAKNKTKMIKM) the chain is Cytoplasmic. The chain crosses the membrane as a helical span at residues 259–279 (MVTVVCVYTICWLPYNVLMIF). Residues 280–282 (KEH) lie on the Extracellular side of the membrane. Residues 283-303 (ISGSVMVYLYFPLHGLAMSHA) form a helical membrane-spanning segment. The Cytoplasmic portion of the chain corresponds to 304–367 (CYNPIIYCYM…EITRAQPTSA (64 aa)).

Belongs to the G-protein coupled receptor 1 family.

The protein resides in the cell membrane. Receptor for the neuropeptides RYamide-1 and RYamide-2. The activity of this receptor is mediated by G proteins which activate a phosphatidyl-inositol-calcium second messenger system. RYamide-2 is the most potent activator. In Tribolium castaneum (Red flour beetle), this protein is RYamide receptor.